The following is a 406-amino-acid chain: Sorting nexin-6 (406 aa).

N-acetylmethionine is present on methionine 1. The residue at position 2 (methionine 2) is an N-acetylmethionine; in Sorting nexin-6, N-terminally processed. The tract at residues methionine 2–asparagine 179 is interaction with PIM1. In terms of domain architecture, PX spans leucine 26 to leucine 173. Residues serine 41 to lysine 47, phenylalanine 100 to lysine 106, and glutamate 114 to methionine 117 each bind a 1,2-diacyl-sn-glycero-3-phospho-(1D-myo-inositol-4,5-bisphosphate). Phosphoserine is present on residues serine 116 and serine 194. The interval glutamate 182–isoleucine 199 is membrane-binding amphipathic helix. Residues valine 203–threonine 406 enclose the BAR domain.

This sequence belongs to the sorting nexin family. In terms of assembly, forms heterodimers with BAR domain-containing sorting nexins SNX1 and SNX2. The heterodimers are proposed to self-assemble into helical arrays on the membrane to stabilize and expand local membrane curvature underlying endosomal tubule formation. Thought to be a component of the originally described retromer complex (also called SNX-BAR retromer) which is a pentamer containing the heterotrimeric retromer cargo-selective complex (CSC), also described as vacuolar protein sorting subcomplex (VPS), and a heterodimeric membrane-deforming subcomplex formed between SNX1 or SNX2 and SNX5 or SNX6 (also called SNX-BAR subcomplex); the respective CSC and SNX-BAR subcomplexes associate with low affinity. Interacts with SNX1, SNX2, VPS26A, VPS29, VPS35, TGFB receptors, BACE1, BRMS1, PIP5K1C. Interacts with DCTN1; the association with DCTN1 is involved in movement of retromer-c ontaining vesicles toward the TGN. Interacts with PIM1; translocating SNX6 to the nucleus. Interacts with CDKN1B and GIT1. Post-translationally, in vitro phosphorylated by PIM1; not affecting PIM1-dependent nuclear translocation.

The protein localises to the early endosome membrane. Its subcellular location is the cytoplasmic vesicle. The protein resides in the cytoplasm. It is found in the nucleus. Its function is as follows. Involved in several stages of intracellular trafficking. Interacts with membranes phosphatidylinositol 3,4-bisphosphate and/or phosphatidylinositol 4,5-bisphosphate. Acts in part as component of the retromer membrane-deforming SNX-BAR subcomplex. The SNX-BAR retromer mediates retrograde transport of cargo proteins from endosomes to the trans-Golgi network (TGN) and is involved in endosome-to-plasma membrane transport for cargo protein recycling. The SNX-BAR subcomplex functions to deform the donor membrane into a tubular profile called endosome-to-TGN transport carrier (ETC). Does not have in vitro vesicle-to-membrane remodeling activity. Involved in retrograde endosome-to-TGN transport of lysosomal enzyme receptor IGF2R. May function as link between transport vesicles and dynactin. Negatively regulates retrograde transport of BACE1 from the cell surface to the trans-Golgi network. Involved in E-cadherin sorting and degradation; inhibits PIP5K1C-mediated E-cadherin degradation. In association with GIT1 involved in EGFR degradation. Promotes lysosomal degradation of CDKN1B. May contribute to transcription regulation. The protein is Sorting nexin-6 (SNX6) of Pongo abelii (Sumatran orangutan).